The sequence spans 180 residues: uncharacterized protein (180 aa).

Positions 1–180 (MVEFEIVKGD…KDYERALRAV (180 aa)) constitute a Macro domain.

This is an uncharacterized protein from Thermococcus kodakarensis (strain ATCC BAA-918 / JCM 12380 / KOD1) (Pyrococcus kodakaraensis (strain KOD1)).